Consider the following 205-residue polypeptide: Dr1-associated corepressor (205 aa).

Residues 14–77 (PARIKKIMQT…SHLKQCIELE (64 aa)) form the Histone-fold domain. Residues 91 to 205 (PDMQGDGEDN…EAEDEEDYDS (115 aa)) are disordered. The segment covering 98-108 (EDNHTDGDKGP) has biased composition (basic and acidic residues). Over residues 138-155 (SEQEDESEDTDTDGEEET) the composition is skewed to acidic residues. Over residues 172–193 (PPTPFMPFTSPLPLPPAPPGPS) the composition is skewed to pro residues. Acidic residues predominate over residues 196 to 205 (EAEDEEDYDS).

Belongs to the NC2 alpha/DRAP1 family. Heterodimer with DR1. Binds BTAF1. Phosphorylation reduces DNA binding, but has no effect on heterodimerization and TBP binding.

It localises to the nucleus. Functionally, the association of the DR1/DRAP1 heterodimer with TBP results in a functional repression of both activated and basal transcription of class II genes. This interaction precludes the formation of a transcription-competent complex by inhibiting the association of TFIIA and/or TFIIB with TBP. Can bind to DNA on its own. The chain is Dr1-associated corepressor from Rattus norvegicus (Rat).